An 878-amino-acid polypeptide reads, in one-letter code: Alanine--tRNA ligase (878 aa).

Zn(2+) is bound by residues H566, H570, C668, and H672. Residues 846-866 are disordered; sequence GGGRPDMAQAGGKQPEKLEEA.

This sequence belongs to the class-II aminoacyl-tRNA synthetase family. Zn(2+) is required as a cofactor.

It is found in the cytoplasm. It carries out the reaction tRNA(Ala) + L-alanine + ATP = L-alanyl-tRNA(Ala) + AMP + diphosphate. Catalyzes the attachment of alanine to tRNA(Ala) in a two-step reaction: alanine is first activated by ATP to form Ala-AMP and then transferred to the acceptor end of tRNA(Ala). Also edits incorrectly charged Ser-tRNA(Ala) and Gly-tRNA(Ala) via its editing domain. The polypeptide is Alanine--tRNA ligase (Bacillus pumilus (strain SAFR-032)).